Reading from the N-terminus, the 653-residue chain is Chaperone protein DnaK (653 aa).

A Phosphothreonine; by autocatalysis modification is found at threonine 200. The segment at 615 to 653 (AEAAAAGAAGAGGAGASAGGASQQQDDVVDAEFKEVKKD) is disordered. A compositionally biased stretch (gly residues) spans 623 to 632 (AGAGGAGASA).

The protein belongs to the heat shock protein 70 family.

Acts as a chaperone. The sequence is that of Chaperone protein DnaK from Paraburkholderia xenovorans (strain LB400).